The following is a 731-amino-acid chain: Catalase-peroxidase (731 aa).

Positions 98 to 226 form a cross-link, tryptophyl-tyrosyl-methioninium (Trp-Tyr) (with M-252); it reads WHAAGTYRTA…LAAVQMGLIY (129 aa). Catalysis depends on His99, which acts as the Proton acceptor. Positions 226 to 252 form a cross-link, tryptophyl-tyrosyl-methioninium (Tyr-Met) (with W-98); the sequence is YVNPEGPDGNPDIVASGHDVIETFGRM. His267 provides a ligand contact to heme b.

The protein belongs to the peroxidase family. Peroxidase/catalase subfamily. In terms of assembly, homodimer or homotetramer. It depends on heme b as a cofactor. In terms of processing, formation of the three residue Trp-Tyr-Met cross-link is important for the catalase, but not the peroxidase activity of the enzyme.

The catalysed reaction is H2O2 + AH2 = A + 2 H2O. The enzyme catalyses 2 H2O2 = O2 + 2 H2O. Its function is as follows. Bifunctional enzyme with both catalase and broad-spectrum peroxidase activity. The sequence is that of Catalase-peroxidase from Ruegeria pomeroyi (strain ATCC 700808 / DSM 15171 / DSS-3) (Silicibacter pomeroyi).